Here is a 718-residue protein sequence, read N- to C-terminus: LON peptidase N-terminal domain and RING finger protein 3 (718 aa).

The segment at 1–69 is disordered; the sequence is MESLRTEQML…PGTSTPESKV (69 aa). Positions 57–66 are enriched in polar residues; that stretch reads EQSPGTSTPE. One copy of the TPR 1 repeat lies at 67 to 100; sequence SKVLLTQADALASRGRIREALEVYRQLSERQQLV. Residues 158-196 form an RING-type 1 zinc finger; the sequence is CRKCHGFLSDPVSLSCGHTFCKLCLERGRAADRRCALCG. TPR repeat units lie at residues 243-276 and 278-310; these read ASQL…APND and LLYS…RPMG. Residues 322–413 are disordered; it reads SQEEAAARGD…TDQGDKPALS (92 aa). Positions 339-352 are enriched in basic and acidic residues; sequence AKVKGDGQQHHMKD. Residues 426 to 464 form an RING-type 2 zinc finger; it reads CALCMRLFYEPVTTPCGHTFCLKCLERCLDHNAKCPLCK. A Lon N-terminal domain is found at 505–714; it reads MEELSNLNKN…GIRRVLAFIS (210 aa).

In Macaca fascicularis (Crab-eating macaque), this protein is LON peptidase N-terminal domain and RING finger protein 3 (LONRF3).